Consider the following 442-residue polypeptide: Adenylosuccinate synthetase (442 aa).

GTP-binding positions include 16–22 (GDEGKGK) and 44–46 (GHT). Catalysis depends on Asp-17, which acts as the Proton acceptor. Positions 17 and 44 each coordinate Mg(2+). IMP-binding positions include 17-20 (DEGK), 42-45 (NAGH), Thr-133, Arg-147, Gln-228, Thr-243, and Arg-307. The active-site Proton donor is the His-45. 303–309 (AVTGRPR) lines the substrate pocket. GTP is bound by residues Arg-309, 335-337 (KLD), and 417-419 (STG).

The protein belongs to the adenylosuccinate synthetase family. In terms of assembly, homodimer. Mg(2+) is required as a cofactor.

It is found in the cytoplasm. It catalyses the reaction IMP + L-aspartate + GTP = N(6)-(1,2-dicarboxyethyl)-AMP + GDP + phosphate + 2 H(+). It participates in purine metabolism; AMP biosynthesis via de novo pathway; AMP from IMP: step 1/2. Plays an important role in the de novo pathway of purine nucleotide biosynthesis. Catalyzes the first committed step in the biosynthesis of AMP from IMP. The chain is Adenylosuccinate synthetase from Koribacter versatilis (strain Ellin345).